We begin with the raw amino-acid sequence, 528 residues long: GMP synthase [glutamine-hydrolyzing] (528 aa).

The Glutamine amidotransferase type-1 domain maps to 3 to 199 (KVAIIDFGSQ…FLDIAGCQKD (197 aa)). Cys83 serves as the catalytic Nucleophile. Catalysis depends on residues His174 and Glu176. The GMPS ATP-PPase domain maps to 200–394 (WTVTSFIDDQ…LGISTEILMR (195 aa)). Residue 227 to 233 (SGGVDSS) participates in ATP binding.

In terms of assembly, homodimer.

The enzyme catalyses XMP + L-glutamine + ATP + H2O = GMP + L-glutamate + AMP + diphosphate + 2 H(+). It participates in purine metabolism; GMP biosynthesis; GMP from XMP (L-Gln route): step 1/1. Functionally, catalyzes the synthesis of GMP from XMP. This is GMP synthase [glutamine-hydrolyzing] from Ehrlichia ruminantium (strain Gardel).